The following is a 511-amino-acid chain: 2-isopropylmalate synthase (511 aa).

Residues 6 to 269 (IIIFDTTLRD…YTDIKCENIF (264 aa)) enclose the Pyruvate carboxyltransferase domain. D15, H203, H205, and N239 together coordinate Mn(2+). The regulatory domain stretch occupies residues 394-511 (ILEKLSVISG…SLKVEERKMA (118 aa)).

This sequence belongs to the alpha-IPM synthase/homocitrate synthase family. LeuA type 1 subfamily. As to quaternary structure, homodimer. The cofactor is Mn(2+).

It localises to the cytoplasm. The catalysed reaction is 3-methyl-2-oxobutanoate + acetyl-CoA + H2O = (2S)-2-isopropylmalate + CoA + H(+). Its pathway is amino-acid biosynthesis; L-leucine biosynthesis; L-leucine from 3-methyl-2-oxobutanoate: step 1/4. Functionally, catalyzes the condensation of the acetyl group of acetyl-CoA with 3-methyl-2-oxobutanoate (2-ketoisovalerate) to form 3-carboxy-3-hydroxy-4-methylpentanoate (2-isopropylmalate). This is 2-isopropylmalate synthase from Campylobacter jejuni subsp. jejuni serotype O:6 (strain 81116 / NCTC 11828).